The primary structure comprises 229 residues: Ribose-5-phosphate isomerase A (229 aa).

Substrate contacts are provided by residues 28 to 31 (TGST), 85 to 88 (DGAD), and 98 to 101 (KGRG). Glu-107 (proton acceptor) is an active-site residue. Lys-125 is a binding site for substrate.

The protein belongs to the ribose 5-phosphate isomerase family. As to quaternary structure, homodimer.

The enzyme catalyses aldehydo-D-ribose 5-phosphate = D-ribulose 5-phosphate. It participates in carbohydrate degradation; pentose phosphate pathway; D-ribose 5-phosphate from D-ribulose 5-phosphate (non-oxidative stage): step 1/1. Catalyzes the reversible conversion of ribose-5-phosphate to ribulose 5-phosphate. This is Ribose-5-phosphate isomerase A from Pyrococcus furiosus (strain ATCC 43587 / DSM 3638 / JCM 8422 / Vc1).